We begin with the raw amino-acid sequence, 190 residues long: T-cell receptor gamma chain C region 5/10-13 (190 aa).

The tract at residues 1 to 157 (DKRTDSDFSP…LQVTTTYAFY (157 aa)) is c region. The chain crosses the membrane as a helical span at residues 158–178 (TYLILFFKSMVHLAFVVFCLF). The Cytoplasmic portion of the chain corresponds to 179 to 190 (RRAAMSCDDQRS).

The protein resides in the membrane. In Mus musculus (Mouse), this protein is T-cell receptor gamma chain C region 5/10-13.